Reading from the N-terminus, the 398-residue chain is Acetate kinase 1 (398 aa).

Residue asparagine 9 participates in Mg(2+) binding. Lysine 16 provides a ligand contact to ATP. Arginine 89 is a substrate binding site. Aspartate 146 functions as the Proton donor/acceptor in the catalytic mechanism. ATP contacts are provided by residues 206-210, 281-283, and 329-333; these read HLGNG, DCR, and GIGEN. Glutamate 384 serves as a coordination point for Mg(2+).

Belongs to the acetokinase family. In terms of assembly, homodimer. Mg(2+) is required as a cofactor. Mn(2+) serves as cofactor.

Its subcellular location is the cytoplasm. It catalyses the reaction acetate + ATP = acetyl phosphate + ADP. Its pathway is metabolic intermediate biosynthesis; acetyl-CoA biosynthesis; acetyl-CoA from acetate: step 1/2. Catalyzes the formation of acetyl phosphate from acetate and ATP. Can also catalyze the reverse reaction. This chain is Acetate kinase 1, found in Vibrio parahaemolyticus serotype O3:K6 (strain RIMD 2210633).